Here is a 102-residue protein sequence, read N- to C-terminus: Salivary thrombin inhibitor anophelin (102 aa).

A signal peptide spans 1-21 (MATKLIVIAFLCAALIAVVQS). Positions 25-102 (YAQGEEPTYD…SDSSSESTEH (78 aa)) are disordered. A compositionally biased stretch (polar residues) spans 59-69 (SQLTEYANTAQ). The segment at 70-73 (DPGR) is blocks active site cleft of host thrombin in a reverse direction compared to substrates. Polar residues predominate over residues 80–90 (QANSNNGDQLP). A compositionally biased stretch (low complexity) spans 91 to 102 (SQSDSSSESTEH).

Belongs to the anophelin family. In terms of assembly, interacts with human F2 (thrombin); the interaction results in thrombin inhibition.

It is found in the secreted. Functionally, salivary protein with anticoagulant activity that inhibits host thrombin (F2). In Anopheles funestus (African malaria mosquito), this protein is Salivary thrombin inhibitor anophelin.